Reading from the N-terminus, the 296-residue chain is Glycine--tRNA ligase alpha subunit (296 aa).

Belongs to the class-II aminoacyl-tRNA synthetase family. In terms of assembly, tetramer of two alpha and two beta subunits.

It localises to the cytoplasm. It carries out the reaction tRNA(Gly) + glycine + ATP = glycyl-tRNA(Gly) + AMP + diphosphate. The protein is Glycine--tRNA ligase alpha subunit of Listeria welshimeri serovar 6b (strain ATCC 35897 / DSM 20650 / CCUG 15529 / CIP 8149 / NCTC 11857 / SLCC 5334 / V8).